The following is a 393-amino-acid chain: Formate-dependent phosphoribosylglycinamide formyltransferase (393 aa).

Residues 17 to 18 (EL) and Glu-77 contribute to the N(1)-(5-phospho-beta-D-ribosyl)glycinamide site. Residues Arg-109, Lys-150, 155–160 (SSGKGQ), 190–193 (EEFL), and Glu-198 contribute to the ATP site. The 191-residue stretch at 114 to 304 (DLAAGELGLR…EFELHLRAVL (191 aa)) folds into the ATP-grasp domain. Mg(2+) contacts are provided by Glu-263 and Glu-275. N(1)-(5-phospho-beta-D-ribosyl)glycinamide-binding positions include Asp-282, Lys-354, and 361-362 (RR).

It belongs to the PurK/PurT family. As to quaternary structure, homodimer.

It catalyses the reaction N(1)-(5-phospho-beta-D-ribosyl)glycinamide + formate + ATP = N(2)-formyl-N(1)-(5-phospho-beta-D-ribosyl)glycinamide + ADP + phosphate + H(+). The protein operates within purine metabolism; IMP biosynthesis via de novo pathway; N(2)-formyl-N(1)-(5-phospho-D-ribosyl)glycinamide from N(1)-(5-phospho-D-ribosyl)glycinamide (formate route): step 1/1. In terms of biological role, involved in the de novo purine biosynthesis. Catalyzes the transfer of formate to 5-phospho-ribosyl-glycinamide (GAR), producing 5-phospho-ribosyl-N-formylglycinamide (FGAR). Formate is provided by PurU via hydrolysis of 10-formyl-tetrahydrofolate. The polypeptide is Formate-dependent phosphoribosylglycinamide formyltransferase (Synechococcus sp. (strain RCC307)).